A 226-amino-acid chain; its full sequence is Phosphatidylserine decarboxylase proenzyme (226 aa).

Ser184 serves as the catalytic Schiff-base intermediate with substrate; via pyruvic acid. Position 184 is a pyruvic acid (Ser); by autocatalysis (Ser184).

Belongs to the phosphatidylserine decarboxylase family. PSD-A subfamily. As to quaternary structure, heterodimer of a large membrane-associated beta subunit and a small pyruvoyl-containing alpha subunit. It depends on pyruvate as a cofactor. Post-translationally, is synthesized initially as an inactive proenzyme. Formation of the active enzyme involves a self-maturation process in which the active site pyruvoyl group is generated from an internal serine residue via an autocatalytic post-translational modification. Two non-identical subunits are generated from the proenzyme in this reaction, and the pyruvate is formed at the N-terminus of the alpha chain, which is derived from the carboxyl end of the proenzyme. The post-translation cleavage follows an unusual pathway, termed non-hydrolytic serinolysis, in which the side chain hydroxyl group of the serine supplies its oxygen atom to form the C-terminus of the beta chain, while the remainder of the serine residue undergoes an oxidative deamination to produce ammonia and the pyruvoyl prosthetic group on the alpha chain.

It localises to the cell membrane. The enzyme catalyses a 1,2-diacyl-sn-glycero-3-phospho-L-serine + H(+) = a 1,2-diacyl-sn-glycero-3-phosphoethanolamine + CO2. It participates in phospholipid metabolism; phosphatidylethanolamine biosynthesis; phosphatidylethanolamine from CDP-diacylglycerol: step 2/2. In terms of biological role, catalyzes the formation of phosphatidylethanolamine (PtdEtn) from phosphatidylserine (PtdSer). This chain is Phosphatidylserine decarboxylase proenzyme, found in Ehrlichia chaffeensis (strain ATCC CRL-10679 / Arkansas).